We begin with the raw amino-acid sequence, 425 residues long: Apolipoprotein N-acyltransferase (425 aa).

A run of 6 helical transmembrane segments spans residues 12–32, 34–54, 60–80, 88–108, 120–140, and 142–162; these read LLACMFVSSVYVNAVLDAYAI, NPYISITLTSLLAPLSMLAFL, SAFALGFFVGALLFYWCALSF, LLPLIIVLIALVYGVLFYLLL, FLGSSFIHPFGFDWLVPDSFF, and YSVFRVDKLSLGLVFLACIFL. The CN hydrolase domain occupies 201–425; it reads VSTKTPQDLK…LGDILFRKRS (225 aa). Glutamate 242 acts as the Proton acceptor in catalysis. The active site involves lysine 296. Catalysis depends on cysteine 349, which acts as the Nucleophile.

It belongs to the CN hydrolase family. Apolipoprotein N-acyltransferase subfamily.

It is found in the cell inner membrane. It catalyses the reaction N-terminal S-1,2-diacyl-sn-glyceryl-L-cysteinyl-[lipoprotein] + a glycerophospholipid = N-acyl-S-1,2-diacyl-sn-glyceryl-L-cysteinyl-[lipoprotein] + a 2-acyl-sn-glycero-3-phospholipid + H(+). The protein operates within protein modification; lipoprotein biosynthesis (N-acyl transfer). Functionally, catalyzes the phospholipid dependent N-acylation of the N-terminal cysteine of apolipoprotein, the last step in lipoprotein maturation. This Helicobacter pylori (strain ATCC 700392 / 26695) (Campylobacter pylori) protein is Apolipoprotein N-acyltransferase.